Here is a 176-residue protein sequence, read N- to C-terminus: Japanin (176 aa).

The first 24 residues, 1 to 24 (MKVLRCLVCSFYIIVSLITTMTIG), serve as a signal peptide directing secretion. Glutamate 47 contacts cholesterol. 2 disulfide bridges follow: cysteine 52-cysteine 174 and cysteine 138-cysteine 162. 2 N-linked (GlcNAc...) asparagine glycosylation sites follow: asparagine 59 and asparagine 155.

This sequence belongs to the calycin superfamily. Lipocalin family. Homodimer; non-disulfide-linked. Each monomer accommodates one molecule of cholesterol in a pocket. As to expression, expressed in salivary glands.

It is found in the secreted. Its function is as follows. Salivary tick protein that modulates host immune response. This protein blocks dendritic cell (DC) differentiation from monocytes. In addition, it inhibits up-regulation of costimulatory molecules and pro-inflammatory cytokines in response to stimuli and promotes up-regulation of co-inhibitory molecules and the anti-inflammatory cytokine interleukin-10. It has a pocket to accomodate cholesterol, which may have immune-modulatory roles, either directly or through interactions with the host gut microbiota. This is Japanin from Rhipicephalus appendiculatus (Brown ear tick).